The chain runs to 81 residues: Cytochrome b559 subunit alpha (81 aa).

Heme contacts are provided by Arg-18 and His-23. A helical membrane pass occupies residues Tyr-19–Thr-40.

Belongs to the PsbE/PsbF family. As to quaternary structure, heterodimer of an alpha subunit and a beta subunit. PSII is composed of 1 copy each of membrane proteins PsbA, PsbB, PsbC, PsbD, PsbE, PsbF, PsbH, PsbI, PsbJ, PsbK, PsbL, PsbM, PsbT, PsbX, PsbY, PsbZ, Psb30/Ycf12, peripheral proteins PsbO, CyanoQ (PsbQ), PsbU, PsbV and a large number of cofactors. It forms dimeric complexes. Requires heme b as cofactor.

The protein resides in the cellular thylakoid membrane. Functionally, this b-type cytochrome is tightly associated with the reaction center of photosystem II (PSII). PSII is a light-driven water:plastoquinone oxidoreductase that uses light energy to abstract electrons from H(2)O, generating O(2) and a proton gradient subsequently used for ATP formation. It consists of a core antenna complex that captures photons, and an electron transfer chain that converts photonic excitation into a charge separation. The protein is Cytochrome b559 subunit alpha of Synechocystis sp. (strain ATCC 27184 / PCC 6803 / Kazusa).